The following is a 47-amino-acid chain: Delta-actitoxin-Aspp1a (47 aa).

3 disulfides stabilise this stretch: Cys4-Cys44, Cys6-Cys34, and Cys27-Cys45.

The protein belongs to the sea anemone sodium channel inhibitory toxin family. Type I subfamily.

The protein resides in the secreted. It is found in the nematocyst. Its function is as follows. Binds specifically to voltage-gated sodium channels (Nav) (site 3), thereby delaying their inactivation during signal transduction. Has a heart stimulation effect on isolated rat atria that is higher than that of Hk7a, Hk8a and Hk16a. The sequence is that of Delta-actitoxin-Aspp1a from Anthopleura sp. (strain 'Zhanjiang') (Sea anemone).